A 160-amino-acid polypeptide reads, in one-letter code: Cytochrome b6-f complex subunit 4 (160 aa).

3 helical membrane-spanning segments follow: residues leucine 36 to valine 56, leucine 95 to glutamate 115, and threonine 131 to isoleucine 151.

It belongs to the cytochrome b family. PetD subfamily. As to quaternary structure, the 4 large subunits of the cytochrome b6-f complex are cytochrome b6, subunit IV (17 kDa polypeptide, petD), cytochrome f and the Rieske protein, while the 4 small subunits are petG, petL, petM and petN. The complex functions as a dimer.

It localises to the plastid. It is found in the chloroplast thylakoid membrane. In terms of biological role, component of the cytochrome b6-f complex, which mediates electron transfer between photosystem II (PSII) and photosystem I (PSI), cyclic electron flow around PSI, and state transitions. In Coleochaete orbicularis (Charophycean green alga), this protein is Cytochrome b6-f complex subunit 4.